The following is a 740-amino-acid chain: Eukaryotic translation initiation factor 3 subunit B (740 aa).

The span at 1 to 10 shows a compositional bias: polar residues; the sequence is MAPSFDTLSE. The tract at residues 1 to 20 is disordered; sequence MAPSFDTLSEQDLHEEEEEE. An RRM domain is found at 40-126; it reads TFVVIDGLPV…HTLLVNKLMD (87 aa). WD repeat units follow at residues 193-230, 232-289, 302-343, 455-496, 513-556, and 571-609; these read AHWT…KQKQ, PHPF…RSFV, EPKK…LLGK, SLKD…SFFA, IEKK…EKPE, and TEHY…HTFA. The interval 696–721 is disordered; sequence AYGLPEEADDPKLAKDAAATTQEQGE.

The protein belongs to the eIF-3 subunit B family. Component of the eukaryotic translation initiation factor 3 (eIF-3) complex.

The protein resides in the cytoplasm. Its function is as follows. RNA-binding component of the eukaryotic translation initiation factor 3 (eIF-3) complex, which is involved in protein synthesis of a specialized repertoire of mRNAs and, together with other initiation factors, stimulates binding of mRNA and methionyl-tRNAi to the 40S ribosome. The eIF-3 complex specifically targets and initiates translation of a subset of mRNAs involved in cell proliferation. The sequence is that of Eukaryotic translation initiation factor 3 subunit B (prt1) from Aspergillus fumigatus (strain ATCC MYA-4609 / CBS 101355 / FGSC A1100 / Af293) (Neosartorya fumigata).